The following is an 880-amino-acid chain: Beta-glucosidase 2 (880 aa).

Positions 1–17 (MLLILELLVLIIGLGVA) are cleaved as a signal peptide. 3 N-linked (GlcNAc...) asparagine glycosylation sites follow: asparagine 24, asparagine 77, and asparagine 271. Aspartate 299 is an active-site residue. 8 N-linked (GlcNAc...) asparagine glycosylation sites follow: asparagine 336, asparagine 343, asparagine 376, asparagine 548, asparagine 589, asparagine 712, asparagine 743, and asparagine 794.

The protein belongs to the glycosyl hydrolase 3 family.

The enzyme catalyses Hydrolysis of terminal, non-reducing beta-D-glucosyl residues with release of beta-D-glucose.. Its pathway is glycan metabolism; cellulose degradation. This Saccharomycopsis fibuligera (Yeast) protein is Beta-glucosidase 2 (BGL2).